The primary structure comprises 421 residues: 4-hydroxy-3-methylbut-2-en-1-yl diphosphate synthase (flavodoxin) (421 aa).

The [4Fe-4S] cluster site is built by Cys-298, Cys-301, Cys-344, and Glu-351.

The protein belongs to the IspG family. [4Fe-4S] cluster is required as a cofactor.

The enzyme catalyses (2E)-4-hydroxy-3-methylbut-2-enyl diphosphate + oxidized [flavodoxin] + H2O + 2 H(+) = 2-C-methyl-D-erythritol 2,4-cyclic diphosphate + reduced [flavodoxin]. It functions in the pathway isoprenoid biosynthesis; isopentenyl diphosphate biosynthesis via DXP pathway; isopentenyl diphosphate from 1-deoxy-D-xylulose 5-phosphate: step 5/6. Functionally, converts 2C-methyl-D-erythritol 2,4-cyclodiphosphate (ME-2,4cPP) into 1-hydroxy-2-methyl-2-(E)-butenyl 4-diphosphate. This is 4-hydroxy-3-methylbut-2-en-1-yl diphosphate synthase (flavodoxin) from Neisseria gonorrhoeae (strain ATCC 700825 / FA 1090).